Consider the following 113-residue polypeptide: Hydrogenase maturation factor HypA (113 aa).

His2 is a binding site for Ni(2+). Positions 73, 76, 89, and 92 each coordinate Zn(2+).

It belongs to the HypA/HybF family.

In terms of biological role, involved in the maturation of [NiFe] hydrogenases. Required for nickel insertion into the metal center of the hydrogenase. The polypeptide is Hydrogenase maturation factor HypA (Acidithiobacillus ferrooxidans (strain ATCC 23270 / DSM 14882 / CIP 104768 / NCIMB 8455) (Ferrobacillus ferrooxidans (strain ATCC 23270))).